A 332-amino-acid chain; its full sequence is Ketol-acid reductoisomerase (NADP(+)) (332 aa).

Residues 2–182 enclose the KARI N-terminal Rossmann domain; that stretch reads AKIYHDLEVS…GATRAGVLET (181 aa). Residues 25-28, R48, S53, and 83-86 each bind NADP(+); these read YGSQ and DTEQ. Residue H108 is part of the active site. G134 contributes to the NADP(+) binding site. Positions 183–328 constitute a KARI C-terminal knotted domain; it reads TFKEETETDL…KVIREMMPWL (146 aa). Residues D191, E195, E227, and E231 each coordinate Mg(2+). S252 contacts substrate.

The protein belongs to the ketol-acid reductoisomerase family. Mg(2+) is required as a cofactor.

The enzyme catalyses (2R)-2,3-dihydroxy-3-methylbutanoate + NADP(+) = (2S)-2-acetolactate + NADPH + H(+). It carries out the reaction (2R,3R)-2,3-dihydroxy-3-methylpentanoate + NADP(+) = (S)-2-ethyl-2-hydroxy-3-oxobutanoate + NADPH + H(+). The protein operates within amino-acid biosynthesis; L-isoleucine biosynthesis; L-isoleucine from 2-oxobutanoate: step 2/4. Its pathway is amino-acid biosynthesis; L-valine biosynthesis; L-valine from pyruvate: step 2/4. In terms of biological role, involved in the biosynthesis of branched-chain amino acids (BCAA). Catalyzes an alkyl-migration followed by a ketol-acid reduction of (S)-2-acetolactate (S2AL) to yield (R)-2,3-dihydroxy-isovalerate. In the isomerase reaction, S2AL is rearranged via a Mg-dependent methyl migration to produce 3-hydroxy-3-methyl-2-ketobutyrate (HMKB). In the reductase reaction, this 2-ketoacid undergoes a metal-dependent reduction by NADPH to yield (R)-2,3-dihydroxy-isovalerate. In Dictyoglomus thermophilum (strain ATCC 35947 / DSM 3960 / H-6-12), this protein is Ketol-acid reductoisomerase (NADP(+)).